A 289-amino-acid polypeptide reads, in one-letter code: tRNA dimethylallyltransferase (289 aa).

9–16 (GTTASGKT) provides a ligand contact to ATP. 11–16 (TASGKT) serves as a coordination point for substrate. The interaction with substrate tRNA stretch occupies residues 34-37 (DSLC).

This sequence belongs to the IPP transferase family. As to quaternary structure, monomer. Mg(2+) serves as cofactor.

The enzyme catalyses adenosine(37) in tRNA + dimethylallyl diphosphate = N(6)-dimethylallyladenosine(37) in tRNA + diphosphate. In terms of biological role, catalyzes the transfer of a dimethylallyl group onto the adenine at position 37 in tRNAs that read codons beginning with uridine, leading to the formation of N6-(dimethylallyl)adenosine (i(6)A). The sequence is that of tRNA dimethylallyltransferase from Campylobacter jejuni (strain RM1221).